The following is a 1179-amino-acid chain: Protein FAM83H (1179 aa).

The segment at 1-286 (MARRSQSSSQ…LFAQSEPLVP (286 aa)) is DUF1669. The tract at residues 1-286 (MARRSQSSSQ…LFAQSEPLVP (286 aa)) is mediates interaction with CSNK1A1 and is required for FAM83H activity in keratin cytoskeleton organization. Thr465 carries the post-translational modification Phosphothreonine. Disordered regions lie at residues 484-577 (ADPD…GRAG) and 636-669 (FPTK…DSFR). Phosphoserine is present on residues Ser513, Ser514, Ser516, Ser523, Ser647, and Ser667. Residue Thr756 is modified to Phosphothreonine. Ser759, Ser785, and Ser813 each carry phosphoserine. Residues 830–1026 (RLPSRFLSAQ…RGPRARLSSA (197 aa)) are disordered. Positions 836–847 (LSAQSHSTSPQG) are enriched in polar residues. 2 positions are modified to phosphoserine: Ser870 and Ser881. Position 883 is a phosphothreonine (Thr883). Residues 884 to 906 (PGFSTRRGSPTTGFIEQKGSPTS) are compositionally biased toward polar residues. Position 892 is a phosphoserine (Ser892). Phosphothreonine is present on Thr894. Phosphoserine is present on residues Ser903, Ser914, Ser925, Ser936, Ser945, Ser1003, Ser1009, Ser1024, and Ser1025. Thr1040 is modified (phosphothreonine). Disordered regions lie at residues 1047 to 1084 (ISAH…APDM) and 1143 to 1165 (EEAS…SKVG). A phosphoserine mark is found at Ser1048, Ser1068, and Ser1147.

The protein belongs to the FAM83 family. As to quaternary structure, directly interacts (via DUF1669) with casein kinase isoforms CSNK1A1, CSNK1A1L, CSNK1D and CSNK1E. Interaction with CSNK1A1 recruits CSNK1A1 to keratin filaments. Interacts with KRT18 and probably other keratins. As to expression, expressed in the tooth follicle.

It localises to the cytoplasm. The protein localises to the cytoskeleton. Its function is as follows. May play a major role in the structural organization and calcification of developing enamel. May play a role in keratin cytoskeleton disassembly by recruiting CSNK1A1 to keratin filaments. Thereby, it may regulate epithelial cell migration. The polypeptide is Protein FAM83H (Homo sapiens (Human)).